The primary structure comprises 473 residues: Glutamate--tRNA ligase (473 aa).

Positions 11-21 (PSPTGFLHIGG) match the 'HIGH' region motif. The 'KMSKS' region signature appears at 240-244 (KLSKR). An ATP-binding site is contributed by Lys-243.

It belongs to the class-I aminoacyl-tRNA synthetase family. Glutamate--tRNA ligase type 1 subfamily. Monomer.

It localises to the cytoplasm. The catalysed reaction is tRNA(Glu) + L-glutamate + ATP = L-glutamyl-tRNA(Glu) + AMP + diphosphate. In terms of biological role, catalyzes the attachment of glutamate to tRNA(Glu) in a two-step reaction: glutamate is first activated by ATP to form Glu-AMP and then transferred to the acceptor end of tRNA(Glu). In Rhodopseudomonas palustris (strain ATCC BAA-98 / CGA009), this protein is Glutamate--tRNA ligase.